The chain runs to 145 residues: Transcription antitermination protein NusB (145 aa).

Belongs to the NusB family.

Involved in transcription antitermination. Required for transcription of ribosomal RNA (rRNA) genes. Binds specifically to the boxA antiterminator sequence of the ribosomal RNA (rrn) operons. The protein is Transcription antitermination protein NusB of Geotalea daltonii (strain DSM 22248 / JCM 15807 / FRC-32) (Geobacter daltonii).